Consider the following 412-residue polypeptide: Methylmalonic aciduria type A homolog, mitochondrial (412 aa).

The transit peptide at methionine 1–isoleucine 15 directs the protein to the mitochondrion. Residues glycine 132–serine 140, aspartate 275, and serine 311–methionine 313 contribute to the GTP site.

This sequence belongs to the SIMIBI class G3E GTPase family. ArgK/MeaB subfamily.

Its subcellular location is the mitochondrion. May have GTPase activity. May also bind and hydrolyze ATP. May function as chaperone. Likely to have a role in propionyl-CoA metabolism and adenosylcobalamin synthesis. The polypeptide is Methylmalonic aciduria type A homolog, mitochondrial (Caenorhabditis briggsae).